A 215-amino-acid chain; its full sequence is Pyrrolidone-carboxylate peptidase (215 aa).

Residues glutamate 80, cysteine 143, and histidine 167 contribute to the active site.

The protein belongs to the peptidase C15 family. Homotetramer.

The protein localises to the cytoplasm. The catalysed reaction is Release of an N-terminal pyroglutamyl group from a polypeptide, the second amino acid generally not being Pro.. Removes 5-oxoproline from various penultimate amino acid residues except L-proline. In Bacillus cereus (strain Q1), this protein is Pyrrolidone-carboxylate peptidase.